Here is a 95-residue protein sequence, read N- to C-terminus: Cell division topological specificity factor (95 aa).

Belongs to the MinE family.

Prevents the cell division inhibition by proteins MinC and MinD at internal division sites while permitting inhibition at polar sites. This ensures cell division at the proper site by restricting the formation of a division septum at the midpoint of the long axis of the cell. This Trichodesmium erythraeum (strain IMS101) protein is Cell division topological specificity factor.